The chain runs to 636 residues: DNA-directed RNA polymerase subunit gamma (636 aa).

Positions 71, 73, 86, and 89 each coordinate Zn(2+). Residues Asp-467, Asp-469, and Asp-471 each coordinate Mg(2+).

This sequence belongs to the RNA polymerase beta' chain family. RpoC1 subfamily. In cyanobacteria the RNAP catalytic core is composed of 2 alpha, 1 beta, 1 beta', 1 gamma and 1 omega subunit. When a sigma factor is associated with the core the holoenzyme is formed, which can initiate transcription. It depends on Mg(2+) as a cofactor. Requires Zn(2+) as cofactor.

The enzyme catalyses RNA(n) + a ribonucleoside 5'-triphosphate = RNA(n+1) + diphosphate. DNA-dependent RNA polymerase catalyzes the transcription of DNA into RNA using the four ribonucleoside triphosphates as substrates. The chain is DNA-directed RNA polymerase subunit gamma from Picosynechococcus sp. (strain ATCC 27264 / PCC 7002 / PR-6) (Agmenellum quadruplicatum).